Here is a 177-residue protein sequence, read N- to C-terminus: MSRVAKNPVKLPAGVEVKFAGQQLSVKGAKGTLELNVHSSVEVTEEAGELRFSARNGDQQARAMAGTTRALVNNMVQGVSQGFERKLQLVGVGYKAQAKGTVLNLALGFSHPVDYELPAGITAETPSQTDILIKGIDKQLVGQVAAEVRGFRPPEPYKGKGVRYADEVVRRKEAKKK.

This sequence belongs to the universal ribosomal protein uL6 family. Part of the 50S ribosomal subunit.

Its function is as follows. This protein binds to the 23S rRNA, and is important in its secondary structure. It is located near the subunit interface in the base of the L7/L12 stalk, and near the tRNA binding site of the peptidyltransferase center. The sequence is that of Large ribosomal subunit protein uL6 from Pseudomonas entomophila (strain L48).